The primary structure comprises 68 residues: Protein transport protein Sec61 subunit gamma (68 aa).

Residues 1 to 32 (MDQFQALIEPARQFSKDSYRLVKRCTKPDRKE) are Cytoplasmic-facing. The chain crosses the membrane as a helical span at residues 33-61 (YQKIAMATAIGFAIMGFIGFFVKLIHIPI). Topologically, residues 62–68 (NNIIVGA) are extracellular.

The protein belongs to the SecE/SEC61-gamma family. In terms of assembly, heterotrimeric complex composed of SEC61-alpha, SEC61-beta and SEC61-gamma. In terms of tissue distribution, expressed in the germline. Expression in the germline is regulated in a sex- and meiotic cycle stage-specific manner. Expressed in somatic tissues including the intestine and somatic gonad. Expressed in the intestine more highly in hermaprodites than in males. In hermaphrodites, weakly expressed in the spermatheca.

It is found in the endoplasmic reticulum membrane. Functionally, required for oocyte development and ovulation. Required for the translocation of secretory and transmembrane proteins into the endoplasmic reticulum in vitro. The chain is Protein transport protein Sec61 subunit gamma from Caenorhabditis elegans.